Consider the following 130-residue polypeptide: Profilin-1 (130 aa).

This sequence belongs to the profilin family. In terms of assembly, interacts with actin. Interacts with RHO1 (GTP-bound form).

The protein resides in the cytoplasm. Its subcellular location is the cytoskeleton. The protein localises to the cell projection. It localises to the phagocytic cup. It is found in the cytoplasmic vesicle. The protein resides in the phagosome. Its function is as follows. Binds to actin and affects the structure of the cytoskeleton. At high concentrations, profilin prevents the polymerization of actin, whereas it enhances it at low concentrations. By binding to PIP2, it inhibits the formation of IP3 and DG. The polypeptide is Profilin-1 (Entamoeba histolytica (strain ATCC 30459 / HM-1:IMSS / ABRM)).